Here is a 662-residue protein sequence, read N- to C-terminus: MKDLRLQGPYRKYIPYNIFQQCGIGHLKTLDYIFAFLIVITNFTLIWKSHSSSFWNRPWDNNSEQELSQLIQFYLDKAFYIHELPPFTIQFYSIIRRLKIAENLRYVSLFLNSSTLGFLFLITRRINCSRLISATGLLILSNWETFRNEGTIISFDSLEWCLFSVVIYSFISISIAKLGTTNWFANVITLSISLGLAISSKFIGIVTWAFVILSFVRQFDRLISDVKVTTIQIIKFVILCLLFVLIIPGSIFIISYSNLLSNFKTDTPQFSKYMSTYFKSYLRGPQVQPSRLYYGSTITLRHLDSMVGYLASHDISYPSDVDEQLVALSFEEFAADNEWLIEHPTLNLSFSEVYHADQLIPVEFGQSIKLRHKSTGKLLRASTAKPPISEQDYDFQISCTKDSNYEGGMDERWDVLLIKDEINNDKKDNADDKYIKPLQSEIRFYNNGQRCGLLGHDLRLPEWGRFEQEVLCMEYPVIPRTTFLIDSVQLPVDFQVPMIEYYIGKISSSAEFNHTLSWSQFLYLFKEYIFKQYKYNYYIKYGKNKVTFEDAFAVEKWPITLDTDSPVWFNFAWYGSLLSMIIFMCVQCKRMISWNPWTTAEPSFSIKWEVYNEFGWECIVGWFLHFYIFTMSPHFNLGKKLYFQSFFFSVLCLLESLDCLAK.

At 1 to 26 (MKDLRLQGPYRKYIPYNIFQQCGIGH) the chain is on the lumenal side. A helical membrane pass occupies residues 27–47 (LKTLDYIFAFLIVITNFTLIW). At 48-159 (KSHSSSFWNR…GTIISFDSLE (112 aa)) the chain is on the cytoplasmic side. Residues 160–180 (WCLFSVVIYSFISISIAKLGT) traverse the membrane as a helical segment. The Lumenal segment spans residues 181-195 (TNWFANVITLSISLG). The helical transmembrane segment at 196 to 216 (LAISSKFIGIVTWAFVILSFV) threads the bilayer. At 217 to 235 (RQFDRLISDVKVTTIQIIK) the chain is on the cytoplasmic side. A helical membrane pass occupies residues 236 to 256 (FVILCLLFVLIIPGSIFIISY). The Lumenal portion of the chain corresponds to 257–482 (SNLLSNFKTD…MEYPVIPRTT (226 aa)). An MIR 1 domain is found at 289–344 (PSRLYYGSTITLRHLDSMVGYLASHDISYPSDVDEQLVALSFEEFAADNEWLIEHP). Residue Asn-347 is glycosylated (N-linked (GlcNAc...) asparagine). MIR domains are found at residues 359–418 (LIPV…VLLI) and 432–488 (DKYI…IDSV). A helical membrane pass occupies residues 483–503 (FLIDSVQLPVDFQVPMIEYYI). Residues 504-565 (GKISSSAEFN…KWPITLDTDS (62 aa)) are Cytoplasmic-facing. The chain crosses the membrane as a helical span at residues 566–586 (PVWFNFAWYGSLLSMIIFMCV). The Lumenal portion of the chain corresponds to 587–617 (QCKRMISWNPWTTAEPSFSIKWEVYNEFGWE). The chain crosses the membrane as a helical span at residues 618-638 (CIVGWFLHFYIFTMSPHFNLG). Residues 639–662 (KKLYFQSFFFSVLCLLESLDCLAK) lie on the Cytoplasmic side of the membrane.

Belongs to the glycosyltransferase 39 family.

The protein resides in the endoplasmic reticulum membrane. It carries out the reaction a di-trans,poly-cis-dolichyl beta-D-mannosyl phosphate + L-seryl-[protein] = 3-O-(alpha-D-mannosyl)-L-seryl-[protein] + a di-trans,poly-cis-dolichyl phosphate + H(+). The catalysed reaction is a di-trans,poly-cis-dolichyl beta-D-mannosyl phosphate + L-threonyl-[protein] = 3-O-(alpha-D-mannosyl)-L-threonyl-[protein] + a di-trans,poly-cis-dolichyl phosphate + H(+). It functions in the pathway protein modification; protein glycosylation. Its function is as follows. Probable protein O-mannosyltransferase involved in O-glycosylation which is essential for cell wall rigidity. Transfers mannose from Dol-P-mannose to Ser or Thr residues on proteins. The sequence is that of Probable dolichyl-phosphate-mannose--protein mannosyltransferase 7 from Saccharomyces cerevisiae (strain ATCC 204508 / S288c) (Baker's yeast).